Reading from the N-terminus, the 624-residue chain is MARLVLCALALLVAGGLADPVRNNVPQKPADPVFAKRQMDLMTLFFHVLEPNYIEANKVIVNTWSLEKNIEHFSNVTAVTTYIKMLENQCCVPRAVPFSILEDEHKFEVVTLFNVLHSAKDYDTFYKTAVYVRDRVNPDLFSYVLSAVIVNRPDTKGIYIPRVFEIFPSYFNNGEIMTTAARINTHGDRLVDFYPSTYKWDKNVVIRWNPHLALLQQPEHTYSLLHSRLQPQLILLQRSLSLPGWLQTEALPVNQHRRGEWFWFLHKQLIARYYMERLSNGLGEIPELGHETVKDGTTRSFGTTMEFSSPVRPNNFNLDQPEFVNEVEQIYDYERRVRDAIDQGYVLNHLGERIDISAPEAIEILGRVIEANVDSPNVQYYKDFISVWKKVLGNSLVHEHQYFHHYIPLVVPSVLEHYQTALRDPAFYMIWKRVLGLFQQWQEKLPHYKPEELAMPQVAIEKVDVDKLVTYFEYSYMNVTSGLPMNVEEAKELYDQVSVLVQHPRLNHKKFQVRVNVKTEVAKTVLVKFFLAPKYDSHGHEIPLHVNSYNFMQLDEFVYDLPQGESVITRDSVETTGNEWTTSYQVWDQAEKASREKHLSAKNMYFQDVLIYHKHTLNPCSHVE.

Positions 1–18 (MARLVLCALALLVAGGLA) are cleaved as a signal peptide. N-linked (GlcNAc...) asparagine glycans are attached at residues N75 and N478.

The protein belongs to the hemocyanin family.

The protein resides in the secreted. It localises to the extracellular space. The sequence is that of Acidic juvenile hormone-suppressible protein 1 (AJSP-1) from Trichoplusia ni (Cabbage looper).